We begin with the raw amino-acid sequence, 673 residues long: MKKLTICSEYTPSGDQPTAIKQLLEGIESGLAHQTLLGVTGSGKTYTIANVIEKLNRPTMMLAPNKTLAAQLYGEMKEFFPDNAVEYFVSYYDYYQPEAYVPTTDTFIEKDASVNEHIEQMRLSATKALLERRDVIIIASVSAIYGLGDPDSYLKMMLHISRGDIINQRDILRRLAELQYTRNDVAFARATYRVRGDVIDIFPAESDRLALRVELFDEEIERISQFDPLTGQVERTLDRVTVYPKTHYATPKEKIIAAVDKIKIELKHRSQQLKDNNKLVEEQRLTQRTQFDIEMMTELGYCSGIENYSRYLSGREEGGAPPTLFDYLPDDGLLIIDESHVTVPQIGAMYKGDRSRKENLVEYGFRLPSALDNRPMKFEEFEAISPQTIYVSATPSKFELEKCGSDIAEQVVRPTGLLDPEIEVRPVETQVDDLLSEINKRLPLDERVLATTLTKRMAEDLTDYLYDHGIKARYLHSDVDTVERVEIIRDFRLGKFDVLVGINLLREGLDMPEVSLVAILDADKEGFLRSDRSLIQTIGRAARNLNGRAILYGDRITGSMRRAIDETERRRVKQHQYNLDNNITPQGVVRRITDVMGVGSYSDAKSLDKVAEANTNYHINQQAEEPLLTTSQIDTKIVELEKLMQGHAQNLEFEQAAAMRDKIAKLRIQQLST.

The Helicase ATP-binding domain maps to 25-413; that stretch reads EGIESGLAHQ…GSDIAEQVVR (389 aa). An ATP-binding site is contributed by 38–45; the sequence is GVTGSGKT. Positions 91–114 match the Beta-hairpin motif; that stretch reads YYDYYQPEAYVPTTDTFIEKDASV. Residues 430 to 583 enclose the Helicase C-terminal domain; it reads QVDDLLSEIN…QHQYNLDNNI (154 aa). The UVR domain maps to 634 to 669; the sequence is DTKIVELEKLMQGHAQNLEFEQAAAMRDKIAKLRIQ.

It belongs to the UvrB family. Forms a heterotetramer with UvrA during the search for lesions. Interacts with UvrC in an incision complex.

Its subcellular location is the cytoplasm. In terms of biological role, the UvrABC repair system catalyzes the recognition and processing of DNA lesions. A damage recognition complex composed of 2 UvrA and 2 UvrB subunits scans DNA for abnormalities. Upon binding of the UvrA(2)B(2) complex to a putative damaged site, the DNA wraps around one UvrB monomer. DNA wrap is dependent on ATP binding by UvrB and probably causes local melting of the DNA helix, facilitating insertion of UvrB beta-hairpin between the DNA strands. Then UvrB probes one DNA strand for the presence of a lesion. If a lesion is found the UvrA subunits dissociate and the UvrB-DNA preincision complex is formed. This complex is subsequently bound by UvrC and the second UvrB is released. If no lesion is found, the DNA wraps around the other UvrB subunit that will check the other stand for damage. In Colwellia psychrerythraea (strain 34H / ATCC BAA-681) (Vibrio psychroerythus), this protein is UvrABC system protein B.